The primary structure comprises 529 residues: tRNA-2-methylthio-N(6)-dimethylallyladenosine synthase (529 aa).

Positions 18 to 134 constitute an MTTase N-terminal domain; sequence RTYQVRTYGC…LPTLLERARH (117 aa). The [4Fe-4S] cluster site is built by Cys27, Cys63, Cys97, Cys171, Cys175, and Cys178. Residues 157 to 404 form the Radical SAM core domain; it reads RESAYAGWVS…IELQERISLE (248 aa). In terms of domain architecture, TRAM spans 407 to 486; that stretch reads QAQVGRTLEL…PHHLIADGAL (80 aa).

This sequence belongs to the methylthiotransferase family. MiaB subfamily. Monomer. It depends on [4Fe-4S] cluster as a cofactor.

The protein localises to the cytoplasm. The enzyme catalyses N(6)-dimethylallyladenosine(37) in tRNA + (sulfur carrier)-SH + AH2 + 2 S-adenosyl-L-methionine = 2-methylsulfanyl-N(6)-dimethylallyladenosine(37) in tRNA + (sulfur carrier)-H + 5'-deoxyadenosine + L-methionine + A + S-adenosyl-L-homocysteine + 2 H(+). In terms of biological role, catalyzes the methylthiolation of N6-(dimethylallyl)adenosine (i(6)A), leading to the formation of 2-methylthio-N6-(dimethylallyl)adenosine (ms(2)i(6)A) at position 37 in tRNAs that read codons beginning with uridine. In Mycobacterium sp. (strain KMS), this protein is tRNA-2-methylthio-N(6)-dimethylallyladenosine synthase.